The chain runs to 450 residues: Tubulin alpha-3 chain (450 aa).

GTP is bound by residues Gln-11, Glu-71, Gly-144, Thr-145, Thr-179, Asn-206, and Asn-228. A Mg(2+)-binding site is contributed by Glu-71. Glu-254 is an active-site residue.

Belongs to the tubulin family. As to quaternary structure, dimer of alpha and beta chains. A typical microtubule is a hollow water-filled tube with an outer diameter of 25 nm and an inner diameter of 15 nM. Alpha-beta heterodimers associate head-to-tail to form protofilaments running lengthwise along the microtubule wall with the beta-tubulin subunit facing the microtubule plus end conferring a structural polarity. Microtubules usually have 13 protofilaments but different protofilament numbers can be found in some organisms and specialized cells. Mg(2+) serves as cofactor. In terms of processing, undergoes a tyrosination/detyrosination cycle, the cyclic removal and re-addition of a C-terminal tyrosine residue by the enzymes tubulin tyrosine carboxypeptidase (TTCP) and tubulin tyrosine ligase (TTL), respectively.

It localises to the cytoplasm. The protein resides in the cytoskeleton. The enzyme catalyses GTP + H2O = GDP + phosphate + H(+). Tubulin is the major constituent of microtubules, a cylinder consisting of laterally associated linear protofilaments composed of alpha- and beta-tubulin heterodimers. Microtubules grow by the addition of GTP-tubulin dimers to the microtubule end, where a stabilizing cap forms. Below the cap, tubulin dimers are in GDP-bound state, owing to GTPase activity of alpha-tubulin. The chain is Tubulin alpha-3 chain (TUBA3) from Eleusine indica (Goosegrass).